The primary structure comprises 245 residues: 4-hydroxy-tetrahydrodipicolinate reductase (245 aa).

NAD(+) is bound by residues 7–12 (GAKGKV), 75–77 (GTT), and 102–105 (APNF). His-132 acts as the Proton donor/acceptor in catalysis. A (S)-2,3,4,5-tetrahydrodipicolinate-binding site is contributed by His-133. The active-site Proton donor is Lys-136. A (S)-2,3,4,5-tetrahydrodipicolinate-binding site is contributed by 142–143 (GT).

Belongs to the DapB family.

It is found in the cytoplasm. The catalysed reaction is (S)-2,3,4,5-tetrahydrodipicolinate + NAD(+) + H2O = (2S,4S)-4-hydroxy-2,3,4,5-tetrahydrodipicolinate + NADH + H(+). The enzyme catalyses (S)-2,3,4,5-tetrahydrodipicolinate + NADP(+) + H2O = (2S,4S)-4-hydroxy-2,3,4,5-tetrahydrodipicolinate + NADPH + H(+). The protein operates within amino-acid biosynthesis; L-lysine biosynthesis via DAP pathway; (S)-tetrahydrodipicolinate from L-aspartate: step 4/4. In terms of biological role, catalyzes the conversion of 4-hydroxy-tetrahydrodipicolinate (HTPA) to tetrahydrodipicolinate. In Mycobacterium ulcerans (strain Agy99), this protein is 4-hydroxy-tetrahydrodipicolinate reductase.